We begin with the raw amino-acid sequence, 145 residues long: Mite group 2 allergen Eur m 2 (145 aa).

The signal sequence occupies residues 1–16; that stretch reads MYKILCLSLLVAAVAA. 3 disulfide bridges follow: cysteine 24/cysteine 135, cysteine 37/cysteine 43, and cysteine 89/cysteine 94.

The protein belongs to the NPC2 family.

It localises to the secreted. The protein is Mite group 2 allergen Eur m 2 (EURM2) of Euroglyphus maynei (Mayne's house dust mite).